The primary structure comprises 277 residues: Carbonyl reductase [NADPH] 3 (277 aa).

Serine 2 carries the post-translational modification N-acetylserine. Residues 10-34, 38-42, 63-64, and asparagine 90 each bind NADP(+); these read VTGA…GDVV, RDEAR, and DI. Phosphoserine is present on serine 30. Serine 140 serves as a coordination point for substrate. Residue tyrosine 194 is the Proton acceptor of the active site. 194 to 198 is a binding site for NADP(+); that stretch reads YGVSK.

Belongs to the short-chain dehydrogenases/reductases (SDR) family.

It is found in the cytoplasm. The enzyme catalyses a secondary alcohol + NADP(+) = a ketone + NADPH + H(+). It carries out the reaction a quinone + NADPH + H(+) = a quinol + NADP(+). In terms of biological role, catalyzes the NADPH-dependent reduction of carbonyl compounds to their corresponding alcohols. Has low NADPH-dependent oxidoreductase activity. Acts on several orthoquinones, as well as on non-quinone compounds, such as isatin or on the anticancer drug oracin. Best substrates for CBR3 is 1,2- naphthoquinone, hence could play a role in protection against cytotoxicity of exogenous quinones. Exerts activity toward ortho-quinones but not paraquinones. No endogenous substrate for CBR3 except isatin has been identified. The sequence is that of Carbonyl reductase [NADPH] 3 (Cbr3) from Mus musculus (Mouse).